We begin with the raw amino-acid sequence, 401 residues long: All trans-polyprenyl-diphosphate synthase PDSS2 (401 aa).

It belongs to the FPP/GGPP synthase family. In terms of assembly, heterotetramer composed of 2 PDSS1/DPS1 and 2 PDSS2/DLP1 subunits.

Its subcellular location is the mitochondrion. The enzyme catalyses 7 isopentenyl diphosphate + (2E,6E)-farnesyl diphosphate = all-trans-decaprenyl diphosphate + 7 diphosphate. It catalyses the reaction 6 isopentenyl diphosphate + (2E,6E)-farnesyl diphosphate = all-trans-nonaprenyl diphosphate + 6 diphosphate. It functions in the pathway cofactor biosynthesis; ubiquinone biosynthesis. Its function is as follows. Heterotetrameric enzyme that catalyzes the condensation of farnesyl diphosphate (FPP), which acts as a primer, and isopentenyl diphosphate (IPP) to produce prenyl diphosphates of varying chain lengths and participates in the determination of the side chain of ubiquinone. Supplies nona and decaprenyl diphosphate, the precursors for the side chain of the isoprenoid quinones ubiquinone-9 (Q9) and ubiquinone-10 (Q10) respectively. The enzyme adds isopentenyl diphosphate molecules sequentially to farnesyl diphosphate with trans stereochemistry. May play a role during cerebellar development. May regulate mitochondrial respiratory chain function. The sequence is that of All trans-polyprenyl-diphosphate synthase PDSS2 from Mus musculus (Mouse).